Reading from the N-terminus, the 312-residue chain is Olfactory receptor 51I2 (312 aa).

At 1–25 (MGLFNVTHPAFFLLTGIPGLESSHS) the chain is on the extracellular side. N-linked (GlcNAc...) asparagine glycosylation occurs at Asn-5. A helical membrane pass occupies residues 26–46 (WLSGPLCVMYAVALGGNTVIL). The Cytoplasmic portion of the chain corresponds to 47 to 54 (QAVRVEPS). The chain crosses the membrane as a helical span at residues 55 to 75 (LHEPMYYFLSMLSFSDVAISM). The Extracellular portion of the chain corresponds to 76 to 99 (ATLPTVLRTFCLNARNITFDACLI). Cys-97 and Cys-189 are disulfide-bonded. Residues 100-120 (QMFLIHFFSMMESGILLAMSF) form a helical membrane-spanning segment. The Cytoplasmic portion of the chain corresponds to 121–139 (DRYVAICDPLRYATVLTTE). A helical membrane pass occupies residues 140 to 160 (VIAAMGLGAAARSFITLFPLP). Topologically, residues 161 to 196 (FLIKRLPICRSNVLSHSYCLHPDMMRLACADISINS) are extracellular. A helical membrane pass occupies residues 197 to 217 (IYGLFVLVSTFGMDLFFIFLS). Residues 218-237 (YVLILRSVMATASREERLKA) lie on the Cytoplasmic side of the membrane. The chain crosses the membrane as a helical span at residues 238 to 258 (LNTCVSHILAVLAFYVPMIGV). Topologically, residues 259 to 273 (STVHRFGKHVPCYIH) are extracellular. Residues 274 to 294 (VLMSNVYLFVPPVLNPLIYSA) traverse the membrane as a helical segment. The Cytoplasmic segment spans residues 295–312 (KTKEIRRAIFRMFHHIKI).

It belongs to the G-protein coupled receptor 1 family.

The protein resides in the cell membrane. Odorant receptor. The polypeptide is Olfactory receptor 51I2 (OR51I2) (Homo sapiens (Human)).